The chain runs to 203 residues: Ribosome biogenesis protein RLP24 (203 aa).

The disordered stretch occupies residues 147-203 (RKAAKENAMDEEIEDEEEEIASEDMMSEDEEMESESEAESTKQKVVLKNKKKSKRSN). Residues 155 to 184 (MDEEIEDEEEEIASEDMMSEDEEMESESEA) show a composition bias toward acidic residues. Positions 191–203 (VVLKNKKKSKRSN) are enriched in basic residues.

It belongs to the eukaryotic ribosomal protein eL24 family. Associated with nucleolar and cytoplasmic pre-60S particles. At the end of biogenesis it dissociates from cytoplasmic pre-60S particles and is likely to be exchanged for its ribosomal homolog, RPL24.

Its subcellular location is the cytoplasm. The protein resides in the nucleus. In terms of biological role, involved in the biogenesis of the 60S ribosomal subunit. Ensures the docking of DEHA2D15950g/NOG1 to pre-60S particles. Activates and recruits ATPase AFG2 to cytoplasmic pre-60S ribosomal particles. The protein is Ribosome biogenesis protein RLP24 (RLP24) of Debaryomyces hansenii (strain ATCC 36239 / CBS 767 / BCRC 21394 / JCM 1990 / NBRC 0083 / IGC 2968) (Yeast).